The following is a 208-amino-acid chain: Histone H1t (208 aa).

The segment covering 1–16 (MSETVPAASAGAVPAV) has biased composition (low complexity). Residues 1-40 (MSETVPAASAGAVPAVMEKPLTKKRGKKPAGLTSASRKAP) form a disordered region. A Phosphoserine modification is found at Ser-9. In terms of domain architecture, H15 spans 40 to 113 (PNLSVSKLIT…GASGSFKLSK (74 aa)). At Arg-58 the chain carries Citrulline. The disordered stretch occupies residues 102–208 (GTGASGSFKL…ANIRKATSRK (107 aa)). Basic residues predominate over residues 111-136 (LSKKVLPKSTRRKANKSASAKTKKLV). Ser-143 is modified (phosphoserine). Over residues 148 to 157 (KTNKRAKKPR) the composition is skewed to basic residues. Residue Thr-159 is modified to Phosphothreonine. A compositionally biased stretch (basic residues) spans 163–175 (KAVRSGRKAKGAK). Phosphoserine occurs at positions 167 and 182. The span at 187 to 208 (RATKPKLTQHHKANIRKATSRK) shows a compositional bias: basic residues.

It belongs to the histone H1/H5 family. Phosphorylated in early spermatids. In terms of processing, citrullination at Arg-58 (H1R54ci) by PADI4 takes place within the DNA-binding site of H1 and results in its displacement from chromatin and global chromatin decondensation, thereby promoting pluripotency and stem cell maintenance.

In terms of biological role, testis-specific histone H1 that forms less compacted chromatin compared to other H1 histone subtypes. Formation of more relaxed chromatin may be required to promote chromatin architecture required for proper chromosome regulation during meiosis, such as homologous recombination. Histones H1 act as linkers that bind to nucleosomes and compact polynucleosomes into a higher-order chromatin configuration. In Macaca mulatta (Rhesus macaque), this protein is Histone H1t.